A 400-amino-acid polypeptide reads, in one-letter code: tRNA(Met) cytidine acetate ligase (400 aa).

ATP contacts are provided by residues 7–20 (ITEYNPLHKGHIYH), Gly102, Asn165, and Arg190.

It belongs to the TmcAL family.

The protein localises to the cytoplasm. It carries out the reaction cytidine(34) in elongator tRNA(Met) + acetate + ATP = N(4)-acetylcytidine(34) in elongator tRNA(Met) + AMP + diphosphate. Its function is as follows. Catalyzes the formation of N(4)-acetylcytidine (ac(4)C) at the wobble position of elongator tRNA(Met), using acetate and ATP as substrates. First activates an acetate ion to form acetyladenylate (Ac-AMP) and then transfers the acetyl group to tRNA to form ac(4)C34. In Clostridium novyi (strain NT), this protein is tRNA(Met) cytidine acetate ligase.